The chain runs to 257 residues: Zinc transporter ZupT (257 aa).

Transmembrane regions (helical) follow at residues 5 to 25 (LILT…GVLG), 32 to 52 (VLAF…LMEM), 61 to 81 (GMSP…YFGL), 109 to 129 (AILL…ATFV), 137 to 157 (LGFG…LAVA), 171 to 191 (IFWA…AWLI), 195 to 215 (LVSP…MVAL), and 236 to 256 (GVLC…TIGI). Fe(2+) is bound by residues Asn120 and Glu123. Zn(2+) contacts are provided by Glu123 and His148. Residues Asn149, Glu152, and Glu181 each contribute to the Fe(2+) site. Zn(2+) is bound at residue Glu152.

This sequence belongs to the ZIP transporter (TC 2.A.5) family. ZupT subfamily.

The protein resides in the cell inner membrane. The enzyme catalyses Zn(2+)(in) = Zn(2+)(out). In terms of biological role, mediates zinc uptake. May also transport other divalent cations. In Salmonella agona (strain SL483), this protein is Zinc transporter ZupT.